The primary structure comprises 96 residues: Co-chaperonin GroES (96 aa).

The protein belongs to the GroES chaperonin family. Heptamer of 7 subunits arranged in a ring. Interacts with the chaperonin GroEL.

It localises to the cytoplasm. Functionally, together with the chaperonin GroEL, plays an essential role in assisting protein folding. The GroEL-GroES system forms a nano-cage that allows encapsulation of the non-native substrate proteins and provides a physical environment optimized to promote and accelerate protein folding. GroES binds to the apical surface of the GroEL ring, thereby capping the opening of the GroEL channel. The protein is Co-chaperonin GroES of Shewanella pealeana (strain ATCC 700345 / ANG-SQ1).